The chain runs to 398 residues: Glycosyltransferase GlyF (398 aa).

The segment at 1 to 259 (MRKSIVLAAD…SEIAFQRSDL (259 aa)) is GT8 domain. UDP contacts are provided by residues 8–13 (AADNAY) and 101–102 (DS). Residues Asp101, Asp103, and His221 each coordinate Mn(2+). Position 221–227 (221–227 (HYASHDK)) interacts with UDP.

It in the N-terminal section; belongs to the glycosyltransferase 8 family.

Its function is as follows. May be involved in the polymorphic O-glycosylation of the serine-rich repeat protein PsrP. Has hydrolytic activity against UDP-galactose and to a lesser extent against UDP-glucose; no glycosyltransferase activity has been seen with tested substrates. The chain is Glycosyltransferase GlyF from Streptococcus pneumoniae serotype 4 (strain ATCC BAA-334 / TIGR4).